The chain runs to 126 residues: MLPAPYRLRDRRAFQALYQAGQRRSGAGLILLFQPMPAGCEGIPSQVGLVIGKKVSKSAVKRNRLRRRLREILRPLCPNLKPGYRLLLISKPNLLTYKWPELQAEVHRLLQKADLLVSPSPDPEPS.

It belongs to the RnpA family. Consists of a catalytic RNA component (M1 or rnpB) and a protein subunit.

It carries out the reaction Endonucleolytic cleavage of RNA, removing 5'-extranucleotides from tRNA precursor.. RNaseP catalyzes the removal of the 5'-leader sequence from pre-tRNA to produce the mature 5'-terminus. It can also cleave other RNA substrates such as 4.5S RNA. The protein component plays an auxiliary but essential role in vivo by binding to the 5'-leader sequence and broadening the substrate specificity of the ribozyme. The protein is Ribonuclease P protein component of Synechococcus sp. (strain JA-3-3Ab) (Cyanobacteria bacterium Yellowstone A-Prime).